Reading from the N-terminus, the 408-residue chain is MLLEQLRRAADERQARALTRRRRIAHTACAPHQAVGPVDAPAPQPLLTFCSNDYMGLASHPDVVAALADGARLYGAGSGASHLVSGHSLAHARLEEELARWFAPHIPQARTLYFCTGYMANMAVLTALGTAGATLFCETLNHASLIDGARLARADVQRYPHCDAAALDALLAASTSPLKLIVTDSVFSMDGDVAPLAELLALAERHDAWIIVDDAHGFGVLGDDGHGVLQALGLNSERFIYIGTLGKAAGVAGAFVAAHETIIEHLVNTARPYIYTTAAPPAVAHALMASLAIIEGEEGRQRRANLNQLIADLRAGLAPLAAAAGWELGDSATAVQPLIVGDNAVSLALSARLEAEGIRVGAIRPPTVPEGTARLRITLSATHTAADVQRLVGVLADAVPPEAKREAA.

R20 lines the substrate pocket. Residue 117–118 (GY) coordinates pyridoxal 5'-phosphate. H142 lines the substrate pocket. 3 residues coordinate pyridoxal 5'-phosphate: S188, H216, and T244. At K247 the chain carries N6-(pyridoxal phosphate)lysine. T367 contributes to the substrate binding site.

The protein belongs to the class-II pyridoxal-phosphate-dependent aminotransferase family. BioF subfamily. Homodimer. It depends on pyridoxal 5'-phosphate as a cofactor.

The catalysed reaction is 6-carboxyhexanoyl-[ACP] + L-alanine + H(+) = (8S)-8-amino-7-oxononanoate + holo-[ACP] + CO2. The protein operates within cofactor biosynthesis; biotin biosynthesis. In terms of biological role, catalyzes the decarboxylative condensation of pimeloyl-[acyl-carrier protein] and L-alanine to produce 8-amino-7-oxononanoate (AON), [acyl-carrier protein], and carbon dioxide. The chain is 8-amino-7-oxononanoate synthase from Cupriavidus pinatubonensis (strain JMP 134 / LMG 1197) (Cupriavidus necator (strain JMP 134)).